A 287-amino-acid polypeptide reads, in one-letter code: Probable aquaporin PIP1-5 (287 aa).

Position 1 is an N-acetylmethionine (Met1). The tract at residues 1–34 (MEGKEEDVNVGANKFPERQPIGTAAQTESKDYKE) is disordered. The Cytoplasmic segment spans residues 1–55 (MEGKEEDVNVGANKFPERQPIGTAAQTESKDYKEPPPAPFFEPGELKSWSFYRAG). Residues 56–76 (IAEFIATFLFLYVTVLTVMGV) form a helical membrane-spanning segment. Residues 77–92 (KRAPNMCASVGIQGIA) are Extracellular-facing. Residues 93–113 (WAFGGMIFALVYCTAGISGGH) form a helical membrane-spanning segment. Residues 114-133 (INPAVTFGLFLARKLSLTRA) are Cytoplasmic-facing. The NPA 1 motif lies at 115-117 (NPA). A helical transmembrane segment spans residues 134-154 (LFYIVMQCLGAICGAGVVKGF). Residues 155 to 175 (QPGLYQTNGGGANVVAHGYTK) lie on the Extracellular side of the membrane. A helical membrane pass occupies residues 176–196 (GSGLGAEIVGTFVLVYTVFSA). Residues 197–209 (TDAKRSARDSHVP) lie on the Cytoplasmic side of the membrane. The helical transmembrane segment at 210–230 (ILAPLPIGFAVFLVHLATIPI) threads the bilayer. At 231-257 (TGTGINPARSLGAAIIYNKDHAWDDHW) the chain is on the extracellular side. Positions 236 to 238 (NPA) match the NPA 2 motif. A helical transmembrane segment spans residues 258 to 278 (IFWVGPFIGAALAALYHQIVI). The Cytoplasmic portion of the chain corresponds to 279–287 (RAIPFKSKT). Ser285 is subject to Phosphoserine.

It belongs to the MIP/aquaporin (TC 1.A.8) family. PIP (TC 1.A.8.11) subfamily. In terms of tissue distribution, predominantly expressed in green siliques. Also expressed above ground, in roots and flower buds.

The protein localises to the cell membrane. Its function is as follows. Aquaporins facilitate the transport of water and small neutral solutes across cell membranes. This is Probable aquaporin PIP1-5 (PIP1-5) from Arabidopsis thaliana (Mouse-ear cress).